The following is a 233-amino-acid chain: 2,3,4,5-tetrahydropyridine-2,6-dicarboxylate N-acetyltransferase (233 aa).

Belongs to the transferase hexapeptide repeat family. DapH subfamily.

It catalyses the reaction (S)-2,3,4,5-tetrahydrodipicolinate + acetyl-CoA + H2O = L-2-acetamido-6-oxoheptanedioate + CoA. Its pathway is amino-acid biosynthesis; L-lysine biosynthesis via DAP pathway; LL-2,6-diaminopimelate from (S)-tetrahydrodipicolinate (acetylase route): step 1/3. In terms of biological role, catalyzes the transfer of an acetyl group from acetyl-CoA to tetrahydrodipicolinate. This chain is 2,3,4,5-tetrahydropyridine-2,6-dicarboxylate N-acetyltransferase, found in Petrotoga mobilis (strain DSM 10674 / SJ95).